A 273-amino-acid chain; its full sequence is DNA repair protein RecO (273 aa).

Belongs to the RecO family.

Its function is as follows. Involved in DNA repair and RecF pathway recombination. In Mycolicibacterium gilvum (strain PYR-GCK) (Mycobacterium gilvum (strain PYR-GCK)), this protein is DNA repair protein RecO.